Reading from the N-terminus, the 968-residue chain is uncharacterized protein (968 aa).

Residues 12 to 32 (LIFIFSLFFLILFFLESSIGF) form a helical membrane-spanning segment.

The protein to E.coli YtfN.

The protein localises to the membrane. This is an uncharacterized protein from Buchnera aphidicola subsp. Schizaphis graminum (strain Sg).